The primary structure comprises 415 residues: Lysosome-associated membrane glycoprotein 2 (415 aa).

A signal peptide spans 1 to 25 (MCLSPVKGAKLILIFLFLGAVQSNA). Residues 26 to 188 (LIVNLTDSKG…SKNEQVCEED (163 aa)) are first lumenal domain. The Lumenal segment spans residues 26–379 (LIVNLTDSKG…AQDCSADEDN (354 aa)). N-linked (GlcNAc...) asparagine glycosylation is found at N29, N45, N54, N57, N97, N115, and N175. Cysteines 37 and 75 form a disulfide. A disulfide bridge connects residues C149 and C185. The tract at residues 189-233 (QTPTTVAPIIHTTAPSTTTTLTPTSTPTPTPTPTPTVGNYSIRNG) is hinge. Low complexity predominate over residues 202–213 (APSTTTTLTPTS). Positions 202–227 (APSTTTTLTPTSTPTPTPTPTPTVGN) are disordered. N-linked (GlcNAc...) asparagine glycans are attached at residues N227, N234, N247, N265, N280, N312, N317, N322, and N361. Residues 234–379 (NTTCLLATMG…AQDCSADEDN (146 aa)) are second lumenal domain. C237 and C270 form a disulfide bridge. C336 and C373 are joined by a disulfide. Residues 380–404 (FLVPIAVGAALGGVLILVLLAYFIG) form a helical membrane-spanning segment. Residues 405 to 415 (LKRHHTGYEQF) lie on the Cytoplasmic side of the membrane. The interval 406–409 (KRHH) is important for binding and subsequent lysosomal degradation of target proteins.

The protein belongs to the LAMP family. Monomer. Forms large homooligomers. Interacts (via its cytoplasmic region) with HSPA8; HSPA8 mediates recruitment of proteins with a KFERQ motif to the surface of the lysosome for chaperone-mediated autophagy. Interacts with HSP90 in the lysosome lumen; this enhances LAMP2 stability. Interacts with MLLT11. Interacts with ABCB9. Interacts with FURIN. Interacts with CT55; this interaction may be important for LAMP2 protein stability. Interacts with TMEM175; inhibiting the proton channel activity of TMEM175. Forms a ternary complex with RAB7A and RUFY4 (via RUN domain); the interaction with RAB7A is mediated by RUFY4 (via RUN and coiled coil domains). In terms of processing, extensively N-glycosylated. Contains a minor proportion of O-linked glycans. As to expression, detected in liver and kidney (at protein level). Detected in liver and kidney.

Its subcellular location is the lysosome membrane. The protein resides in the endosome membrane. The protein localises to the cytoplasmic vesicle. It localises to the autophagosome membrane. It is found in the cell membrane. In terms of biological role, lysosomal membrane glycoprotein which plays an important role in lysosome biogenesis, lysosomal pH regulation and autophagy. Acts as an important regulator of lysosomal lumen pH regulation by acting as a direct inhibitor of the proton channel TMEM175, facilitating lysosomal acidification for optimal hydrolase activity. Plays an important role in chaperone-mediated autophagy, a process that mediates lysosomal degradation of proteins in response to various stresses and as part of the normal turnover of proteins with a long biological half-live. Functions by binding target proteins, such as GAPDH, NLRP3 and MLLT11, and targeting them for lysosomal degradation. In the chaperone-mediated autophagy, acts downstream of chaperones, such as HSPA8/HSC70, which recognize and bind substrate proteins and mediate their recruitment to lysosomes, where target proteins bind LAMP2. Plays a role in lysosomal protein degradation in response to starvation. Required for the fusion of autophagosomes with lysosomes during autophagy. Cells that lack LAMP2 express normal levels of VAMP8, but fail to accumulate STX17 on autophagosomes, which is the most likely explanation for the lack of fusion between autophagosomes and lysosomes. Required for normal degradation of the contents of autophagosomes. Required for efficient MHC class II-mediated presentation of exogenous antigens via its function in lysosomal protein degradation; antigenic peptides generated by proteases in the endosomal/lysosomal compartment are captured by nascent MHC II subunits. Is not required for efficient MHC class II-mediated presentation of endogenous antigens. The protein is Lysosome-associated membrane glycoprotein 2 (Lamp2) of Mus musculus (Mouse).